The chain runs to 378 residues: Tyrosinase-like protein phomQ1' (378 aa).

A helical membrane pass occupies residues 42–62 (TIIVVSVITFAAIIGCWVFLS). Residues H130 and H139 each coordinate Cu cation. Residue N209 is glycosylated (N-linked (GlcNAc...) asparagine). Cu cation-binding residues include H279 and H305.

Belongs to the tyrosinase family. Cu(2+) is required as a cofactor.

It localises to the membrane. Its pathway is mycotoxin biosynthesis. Its function is as follows. Tyrosinase-like protein; part of the gene cluster that mediates the biosynthesis of the phomopsins, a group of hexapeptide mycotoxins which infects lupins and causes lupinosis disease in livestock. The pathway starts with the processing of the precursor phomA' by several endopeptidases including kexin proteases as well as the cluster-specific S41 family peptidase phomP1 and the oligopeptidase phomG' to produce 10 identical copies of the hexapeptide Tyr-Val-Ile-Pro-Ile-Asp. After being excised from the precursor peptide, the core peptides are cyclized and modified post-translationally by enzymes encoded within the gene cluster. The timing and order of proteolysis of the phomA' precursor and PTMs are still unknown. Two tyrosinase-like enzymes, phomQ1' and phomQ2, catalyze the chlorination and hydroxylation of Tyr, respectively. PhomYb, is proposed to be involved in the construction of the macrocyclic structure. The other 4 ustYa family proteins may be involved in PTMs that generate the unique structure of phomopsin A. PhomYa' is required for the hydroxylation of C-beta of Tyr. PhomYc', phomYd', and phomYe are responsible for the biosynthesis of 2,3-dehydroisoleucine (dIle), 2,3-dehydroaspartic acid (dAsp), and 3,4-dehydroproline (dPro), respectively. While dIle formation by phomYc' is indispensable for the installation of dAsp by phomYd', the order of the other PTMs have not been elucidated yet. Most of the biosynthetic enzymes likely have broad substrate specificity, and thus, there might be a metabolic grid from a precursor to phomopsin A. The enzyme(s) responsible for the biosynthesis of 3,4-dehydrovaline (dVal) have also not been identified yet. Finally, phomM' acts as an S-adenosylmethionine-dependent alpha-N-methyltransferase that catalyzes two successive N-methylation reactions, converting N-desmethyl-phomopsin A to phomopsin A and phomopsin A further to an N,N-dimethylated congener called phomopsin E. The sequence is that of Tyrosinase-like protein phomQ1' from Diaporthe leptostromiformis (Lupinosis disease fungus).